Here is a 504-residue protein sequence, read N- to C-terminus: Arabinose import ATP-binding protein AraG (504 aa).

ABC transporter domains follow at residues 8–243 and 256–499; these read LSFR…MVGR and YGEE…MPKV. 40–47 contributes to the ATP binding site; the sequence is GENGAGKS.

This sequence belongs to the ABC transporter superfamily. Arabinose importer (TC 3.A.1.2.2) family. In terms of assembly, the complex is composed of two ATP-binding proteins (AraG), two transmembrane proteins (AraH) and a solute-binding protein (AraF).

The protein resides in the cell inner membrane. It catalyses the reaction L-arabinose(out) + ATP + H2O = L-arabinose(in) + ADP + phosphate + H(+). Its function is as follows. Part of the ABC transporter complex AraFGH involved in arabinose import. Responsible for energy coupling to the transport system. The sequence is that of Arabinose import ATP-binding protein AraG from Escherichia coli O157:H7.